We begin with the raw amino-acid sequence, 284 residues long: Aliphatic sulfonates import ATP-binding protein SsuB (284 aa).

The ABC transporter domain maps to 21 to 242; sequence LRIAHAVKRY…HRGAPAFARL (222 aa). 53-60 contacts ATP; it reads GRSGCGKS.

The protein belongs to the ABC transporter superfamily. Aliphatic sulfonates importer (TC 3.A.1.17.2) family. As to quaternary structure, the complex is composed of two ATP-binding proteins (SsuB), two transmembrane proteins (SsuC) and a solute-binding protein (SsuA).

The protein localises to the cell inner membrane. It carries out the reaction ATP + H2O + aliphatic sulfonate-[sulfonate-binding protein]Side 1 = ADP + phosphate + aliphatic sulfonateSide 2 + [sulfonate-binding protein]Side 1.. Functionally, part of the ABC transporter complex SsuABC involved in aliphatic sulfonates import. Responsible for energy coupling to the transport system. This Ralstonia nicotianae (strain ATCC BAA-1114 / GMI1000) (Ralstonia solanacearum) protein is Aliphatic sulfonates import ATP-binding protein SsuB.